The following is a 281-amino-acid chain: ATP synthase gamma chain (281 aa).

It belongs to the ATPase gamma chain family. In terms of assembly, F-type ATPases have 2 components, CF(1) - the catalytic core - and CF(0) - the membrane proton channel. CF(1) has five subunits: alpha(3), beta(3), gamma(1), delta(1), epsilon(1). CF(0) has three main subunits: a, b and c.

Its subcellular location is the cell inner membrane. Its function is as follows. Produces ATP from ADP in the presence of a proton gradient across the membrane. The gamma chain is believed to be important in regulating ATPase activity and the flow of protons through the CF(0) complex. The polypeptide is ATP synthase gamma chain (Ehrlichia canis (strain Jake)).